Consider the following 230-residue polypeptide: UPF0173 metal-dependent hydrolase TM1040_1920 (230 aa).

This sequence belongs to the UPF0173 family.

This Ruegeria sp. (strain TM1040) (Silicibacter sp.) protein is UPF0173 metal-dependent hydrolase TM1040_1920.